The sequence spans 1662 residues: Cortactin-binding protein 2 (1662 aa).

Disordered regions lie at residues 1–23 (MATD…AGAA), 203–222 (KKKT…RSTE), 361–440 (SHSD…LHPG), 454–479 (GNAN…PTSR), and 498–618 (RFTS…PSID). Residues 119–276 (KKMQERMSAQ…EQLKRGSDSK (158 aa)) adopt a coiled-coil conformation. Residues 386-396 (PSTDSTPDPTS) show a composition bias toward low complexity. Residues 411–422 (QTPGIAPQNSQA) show a composition bias toward polar residues. Arg-498 bears the Asymmetric dimethylarginine mark. The segment covering 583-597 (TVASPPSSLPQGNRV) has biased composition (polar residues). ANK repeat units lie at residues 709–739 (GRPT…DINY), 743–772 (DGHS…QINA), 776–805 (NGFT…NINH), 809–838 (GGQT…NRSV), 842–871 (DGWT…PACG), and 912–942 (EGWT…EPER). The tract at residues 1450–1474 (GESGAWRKVNTSPRRKSGRFSLPTW) is disordered. Ser-1524 is subject to Phosphoserine. Disordered regions lie at residues 1580–1602 (SQKE…KSKT) and 1618–1662 (SKVT…KPNK). A compositionally biased stretch (polar residues) spans 1582-1599 (KEVSPLSSHQTTECSNSK). Over residues 1624 to 1638 (SQNTKRSSSSSNTRQ) the composition is skewed to low complexity. Residues 1639–1648 (IEINNNSKEN) show a composition bias toward polar residues. A compositionally biased stretch (basic and acidic residues) spans 1649 to 1662 (WNLHKNEHLDKPNK).

As to quaternary structure, interacts with CTTN/cortactin SH3 domain. Interacts with STRN, STRN4/zinedin and MOB4/phocein; this interactions mediate the association with the STRIPAK core complex and may regulate dendritic spine distribution of the STRIPAK complex in hippocampal neurons. Activation of glutamate receptors weakens the interaction with STRN and STRN4.

Its subcellular location is the cytoplasm. The protein resides in the cell cortex. The protein localises to the cell projection. It localises to the dendritic spine. Regulates the dendritic spine distribution of CTTN/cortactin in hippocampal neurons, and thus controls dendritic spinogenesis and dendritic spine maintenance. Associates with the striatin-interacting phosphatase and kinase (STRIPAK) core complex to regulate dendritic spine distribution of the STRIPAK complex in hippocampal neurons. This chain is Cortactin-binding protein 2 (CTTNBP2), found in Chlorocebus aethiops (Green monkey).